Consider the following 199-residue polypeptide: Zinc finger matrin-type protein 2 (199 aa).

Alanine 2 is modified (N-acetylalanine). Glycyl lysine isopeptide (Lys-Gly) (interchain with G-Cter in SUMO2) cross-links involve residues lysine 8, lysine 36, lysine 39, lysine 45, lysine 55, lysine 61, lysine 64, lysine 70, lysine 102, and lysine 123. Residues 27–46 (KRLTEEREKKDGKPVQPVKR) form a disordered region. The Matrin-type zinc finger occupies 80–104 (YYCNVCDCVVKDSINFLDHINGKKH). Residues 150–173 (REEEEKAKAYKKEKQKEKKRRAEE) are compositionally biased toward basic and acidic residues. The interval 150–175 (REEEEKAKAYKKEKQKEKKRRAEEDL) is disordered.

Component of the spliceosome B complex.

It is found in the nucleus. Functionally, involved in pre-mRNA splicing as a component of the spliceosome. The sequence is that of Zinc finger matrin-type protein 2 (ZMAT2) from Homo sapiens (Human).